A 45-amino-acid polypeptide reads, in one-letter code: Large ribosomal subunit protein bL34 (45 aa).

Residues 1–45 form a disordered region; sequence MTKRTFGGTSRKRKRVSGFRVRMRSHTGRRVIKSRRKRGRDRIAV. Residues 10 to 45 show a composition bias toward basic residues; the sequence is SRKRKRVSGFRVRMRSHTGRRVIKSRRKRGRDRIAV.

This sequence belongs to the bacterial ribosomal protein bL34 family.

In Prochlorococcus marinus (strain MIT 9515), this protein is Large ribosomal subunit protein bL34.